We begin with the raw amino-acid sequence, 165 residues long: Ribosome maturation factor RimM (165 aa).

The 73-residue stretch at 89–161 (EADTHYVVDL…KIVIKPVRQW (73 aa)) folds into the PRC barrel domain.

Belongs to the RimM family. As to quaternary structure, binds ribosomal protein uS19.

It localises to the cytoplasm. Functionally, an accessory protein needed during the final step in the assembly of 30S ribosomal subunit, possibly for assembly of the head region. Essential for efficient processing of 16S rRNA. May be needed both before and after RbfA during the maturation of 16S rRNA. It has affinity for free ribosomal 30S subunits but not for 70S ribosomes. This Clostridium botulinum (strain Eklund 17B / Type B) protein is Ribosome maturation factor RimM.